The following is a 427-amino-acid chain: Histidine--tRNA ligase (427 aa).

The protein belongs to the class-II aminoacyl-tRNA synthetase family. In terms of assembly, homodimer.

It is found in the cytoplasm. It catalyses the reaction tRNA(His) + L-histidine + ATP = L-histidyl-tRNA(His) + AMP + diphosphate + H(+). This Mycobacterium leprae (strain TN) protein is Histidine--tRNA ligase (hisS).